Here is a 261-residue protein sequence, read N- to C-terminus: Ribosome biogenesis protein C3_06160C_A (261 aa).

Residues 1 to 38 form a disordered region; the sequence is MPQNEYIEQHIKKHGRRLDYEERKRKKEAREGHRVAKD. 2 short sequence motifs (nuclear localization signal) span residues 11 to 18 and 51 to 58; these read IKKHGRRL and AKKRYAEK. The span at 17–37 shows a compositional bias: basic and acidic residues; the sequence is RLDYEERKRKKEAREGHRVAK. The disordered stretch occupies residues 59 to 85; the sequence is VAMKKKIKAHQESKVKGPSTPKAEDGE.

This sequence belongs to the eukaryotic ribosomal protein eS8 family. Ribosome biogenesis protein NSA2 subfamily. In terms of assembly, component of the pre-66S ribosomal particle. Interacts with NOP7 and RRP1. Interacts with RSA4 (via WD repeats).

The protein localises to the nucleus. Its subcellular location is the nucleolus. Functionally, involved in the biogenesis of the 60S ribosomal subunit. May play a part in the quality control of pre-60S particles. This Candida albicans (strain SC5314 / ATCC MYA-2876) (Yeast) protein is Ribosome biogenesis protein C3_06160C_A.